A 252-amino-acid chain; its full sequence is Sulfate transporter CysZ (252 aa).

A run of 5 helical transmembrane segments spans residues 29-49 (FVLLPLIANVLLVGGALFYIF), 66-86 (FLSWLSYILWPLLVLTVLATF), 141-160 (LVYILPKAIGLFLLLLIPAL), 164-186 (VAPFLWFIFTAWMLAIQYADYPF), and 212-232 (ALVSVFTTIPVLNLIVMPVAV).

Belongs to the CysZ family.

It is found in the cell inner membrane. Functionally, high affinity, high specificity proton-dependent sulfate transporter, which mediates sulfate uptake. Provides the sulfur source for the cysteine synthesis pathway. This is Sulfate transporter CysZ from Vibrio atlanticus (strain LGP32) (Vibrio splendidus (strain Mel32)).